Here is a 943-residue protein sequence, read N- to C-terminus: Nuclear receptor coactivator 7 (943 aa).

An N-acetylmethionine modification is found at Met1. The segment covering 1–15 (MDTKEEKKEQKERKQ) has biased composition (basic and acidic residues). Positions 1–32 (MDTKEEKKEQKERKQSYFARLKKKKQAKQNAE) form a coiled coil. The tract at residues 1 to 83 (MDTKEEKKEQ…RKSNQLKEIR (83 aa)) is disordered. At Ser92 the chain carries Phosphoserine. Positions 117-160 (MEYTAGSQDTLNSVALKFNVTPNKLVELNKLFTHTIVPGQVLFV) constitute a LysM domain. At Thr137 the chain carries Phosphothreonine. The segment at 169-189 (TIQLSSSTPGATVSPSSSDAE) is disordered. Polar residues predominate over residues 177–187 (PGATVSPSSSD). Phosphoserine occurs at positions 182, 186, 211, 212, and 214. A disordered region spans residues 334-369 (EKRQQNGERTLALDAKSVRSPEESTERTCTRIEPPD). Residues 349–369 (KSVRSPEESTERTCTRIEPPD) show a composition bias toward basic and acidic residues. A phosphoserine mark is found at Ser442, Ser498, and Ser500. The span at 486-499 (EKQDEAPEVDKHSG) shows a compositional bias: basic and acidic residues. 2 disordered regions span residues 486-507 (EKQDEAPEVDKHSGSPENLGES) and 543-576 (LSDRKSIEPGGIDITLSSSLPQAGDSPPEDNKEP). The TLDc domain occupies 782 to 943 (ALLENMHIEQ…VQDLEVWTFE (162 aa)).

Belongs to the OXR1 family. As to quaternary structure, interacts with ESR1, ESR2A, ESR2B, THRB, PPARG and RARA in a ligand-inducible manner. Interacts with the heterodimer AHR-ARNT. As to expression, highly expressed in brain and kidney. Weakly expressed in mammary gland, lung and testis. In brain, expression is found in neurons of cerebral cortex, thalamus, hypothalamus, hippocampus, cerebellum, striatum and choroid plexus.

It localises to the nucleus. Functionally, enhances the transcriptional activities of several nuclear receptors. Involved in the coactivation of different nuclear receptors, such as ESR1, THRB, PPARG and RARA. This chain is Nuclear receptor coactivator 7 (Ncoa7), found in Mus musculus (Mouse).